The sequence spans 308 residues: uncharacterized protein (308 aa).

The signal sequence occupies residues 1–17 (MKSLALLLSLLINFSIG). N-linked (GlcNAc...) asparagine glycosylation is found at N13, N91, N159, and N210. Positions 213–308 (DEISGGTGAG…HDNYISSFCT (96 aa)) are disordered. Gly residues-rich tracts occupy residues 217–231 (GGTG…GSGS) and 239–252 (SDGG…GSGS). Positions 267–284 (NKNNNKNKNNNNNNNNYN) are enriched in low complexity.

Its subcellular location is the secreted. This is an uncharacterized protein from Dictyostelium discoideum (Social amoeba).